The primary structure comprises 493 residues: Galactose-1-phosphate uridylyltransferase (493 aa).

This sequence belongs to the galactose-1-phosphate uridylyltransferase type 2 family.

The protein localises to the cytoplasm. It carries out the reaction alpha-D-galactose 1-phosphate + UDP-alpha-D-glucose = alpha-D-glucose 1-phosphate + UDP-alpha-D-galactose. Its pathway is carbohydrate metabolism; galactose metabolism. The polypeptide is Galactose-1-phosphate uridylyltransferase (Streptococcus thermophilus (strain CNRZ 1066)).